The primary structure comprises 221 residues: Uracil-DNA glycosylase (221 aa).

The Proton acceptor role is filled by D65.

The protein belongs to the uracil-DNA glycosylase (UDG) superfamily. UNG family.

It localises to the cytoplasm. It carries out the reaction Hydrolyzes single-stranded DNA or mismatched double-stranded DNA and polynucleotides, releasing free uracil.. In terms of biological role, excises uracil residues from the DNA which can arise as a result of misincorporation of dUMP residues by DNA polymerase or due to deamination of cytosine. The chain is Uracil-DNA glycosylase from Flavobacterium johnsoniae (strain ATCC 17061 / DSM 2064 / JCM 8514 / BCRC 14874 / CCUG 350202 / NBRC 14942 / NCIMB 11054 / UW101) (Cytophaga johnsonae).